A 288-amino-acid chain; its full sequence is ATP synthase gamma chain (288 aa).

The protein belongs to the ATPase gamma chain family. As to quaternary structure, F-type ATPases have 2 components, CF(1) - the catalytic core - and CF(0) - the membrane proton channel. CF(1) has five subunits: alpha(3), beta(3), gamma(1), delta(1), epsilon(1). CF(0) has three main subunits: a, b and c.

Its subcellular location is the cell inner membrane. Its function is as follows. Produces ATP from ADP in the presence of a proton gradient across the membrane. The gamma chain is believed to be important in regulating ATPase activity and the flow of protons through the CF(0) complex. In Acidovorax ebreus (strain TPSY) (Diaphorobacter sp. (strain TPSY)), this protein is ATP synthase gamma chain.